The chain runs to 258 residues: MTSVNAVLLGLVQAAGEFLPISSSAHLVLMPWLLGMEYQGLTYDIFLHLATLIAVLIYFRKEWFTIIKDGLTKPKTEEGKILWLLVLGTIPAAICGVLFEDWIETVFRSPFVIAAALIVFAVILHLADKRAGQKDVALNVKTVLIIGCAQALALMPGVSRSGITITAALFLGFSRAESAKISFLLSTPIIAGAAVLKLKDINPADINAAFIAGFLTAAIFGWLFIKFLMNYVQKHNFNIFVVYRIALGVIIIITALMK.

A run of 8 helical transmembrane segments spans residues 14-34 (AAGE…PWLL), 39-59 (QGLT…LIYF), 79-99 (GKIL…GVLF), 106-126 (VFRS…ILHL), 136-156 (VALN…ALMP), 176-196 (AESA…AAVL), 209-229 (AFIA…KFLM), and 237-257 (FNIF…TALM).

The protein belongs to the UppP family.

The protein resides in the cell membrane. It carries out the reaction di-trans,octa-cis-undecaprenyl diphosphate + H2O = di-trans,octa-cis-undecaprenyl phosphate + phosphate + H(+). Its function is as follows. Catalyzes the dephosphorylation of undecaprenyl diphosphate (UPP). Confers resistance to bacitracin. In Elusimicrobium minutum (strain Pei191), this protein is Undecaprenyl-diphosphatase.